Consider the following 146-residue polypeptide: D-aminoacyl-tRNA deacylase (146 aa).

A Gly-cisPro motif, important for rejection of L-amino acids motif is present at residues 137-138 (GP).

Belongs to the DTD family. In terms of assembly, homodimer.

It localises to the cytoplasm. It carries out the reaction glycyl-tRNA(Ala) + H2O = tRNA(Ala) + glycine + H(+). It catalyses the reaction a D-aminoacyl-tRNA + H2O = a tRNA + a D-alpha-amino acid + H(+). An aminoacyl-tRNA editing enzyme that deacylates mischarged D-aminoacyl-tRNAs. Also deacylates mischarged glycyl-tRNA(Ala), protecting cells against glycine mischarging by AlaRS. Acts via tRNA-based rather than protein-based catalysis; rejects L-amino acids rather than detecting D-amino acids in the active site. By recycling D-aminoacyl-tRNA to D-amino acids and free tRNA molecules, this enzyme counteracts the toxicity associated with the formation of D-aminoacyl-tRNA entities in vivo and helps enforce protein L-homochirality. The polypeptide is D-aminoacyl-tRNA deacylase (Bacillus cereus (strain ATCC 14579 / DSM 31 / CCUG 7414 / JCM 2152 / NBRC 15305 / NCIMB 9373 / NCTC 2599 / NRRL B-3711)).